A 183-amino-acid polypeptide reads, in one-letter code: ATP synthase subunit delta (183 aa).

This sequence belongs to the ATPase delta chain family. In terms of assembly, F-type ATPases have 2 components, F(1) - the catalytic core - and F(0) - the membrane proton channel. F(1) has five subunits: alpha(3), beta(3), gamma(1), delta(1), epsilon(1). CF(0) has four main subunits: a(1), b(1), b'(1) and c(10-14). The alpha and beta chains form an alternating ring which encloses part of the gamma chain. F(1) is attached to F(0) by a central stalk formed by the gamma and epsilon chains, while a peripheral stalk is formed by the delta, b and b' chains.

Its subcellular location is the cellular thylakoid membrane. F(1)F(0) ATP synthase produces ATP from ADP in the presence of a proton or sodium gradient. F-type ATPases consist of two structural domains, F(1) containing the extramembraneous catalytic core and F(0) containing the membrane proton channel, linked together by a central stalk and a peripheral stalk. During catalysis, ATP synthesis in the catalytic domain of F(1) is coupled via a rotary mechanism of the central stalk subunits to proton translocation. Its function is as follows. This protein is part of the stalk that links CF(0) to CF(1). It either transmits conformational changes from CF(0) to CF(1) or is implicated in proton conduction. The chain is ATP synthase subunit delta from Trichormus variabilis (strain ATCC 29413 / PCC 7937) (Anabaena variabilis).